A 295-amino-acid polypeptide reads, in one-letter code: Glutamyl-Q tRNA(Asp) synthetase (295 aa).

L-glutamate is bound by residues 9–13 (RFAPT) and glutamate 45. Positions 12-22 (PTPSGFLHFGS) match the 'HIGH' region motif. Zn(2+) is bound by residues cysteine 101, cysteine 103, tyrosine 115, and cysteine 119. L-glutamate is bound by residues tyrosine 172 and arginine 190. Residues 228–232 (KLGKS) carry the 'KMSKS' region motif. Lysine 231 serves as a coordination point for ATP.

Belongs to the class-I aminoacyl-tRNA synthetase family. GluQ subfamily. Requires Zn(2+) as cofactor.

Functionally, catalyzes the tRNA-independent activation of glutamate in presence of ATP and the subsequent transfer of glutamate onto a tRNA(Asp). Glutamate is transferred on the 2-amino-5-(4,5-dihydroxy-2-cyclopenten-1-yl) moiety of the queuosine in the wobble position of the QUC anticodon. The polypeptide is Glutamyl-Q tRNA(Asp) synthetase (Pseudomonas putida (strain GB-1)).